The chain runs to 423 residues: Histidine--tRNA ligase (423 aa).

The protein belongs to the class-II aminoacyl-tRNA synthetase family. As to quaternary structure, homodimer.

It localises to the cytoplasm. It carries out the reaction tRNA(His) + L-histidine + ATP = L-histidyl-tRNA(His) + AMP + diphosphate + H(+). The chain is Histidine--tRNA ligase from Desulfosudis oleivorans (strain DSM 6200 / JCM 39069 / Hxd3) (Desulfococcus oleovorans).